Consider the following 155-residue polypeptide: Acetylaranotin biosynthesis cluster protein L (155 aa).

It participates in mycotoxin biosynthesis. In terms of biological role, nonribosomal peptide synthetase; part of the gene cluster that mediates the biosynthesis of acetylaranotin, a member of the epipolythiodioxopiperazine (ETP) class of toxins characterized by a disulfide-bridged cyclic dipeptide. The first step of acetylaranotin biosynthesis is performed by the NRPS ataP which produces diketopiperazine cyclo-L-Phe-L-Phe via the condensation of 2 phenylalanines (L-Phe). The ataC domain of ataTC then catalyzes the formation of bishydroxylation of cyclo-L-Phe-L-Phe. The glutathione S-transferase domain ataG in ataIMG further catalyzes the conjugation of two glutathiones to the bishydroxylated intermediate. Next, the dipeptidase ataJ removes the Glu residues. The following step is performed by the carbon sulfur lyase domain ataI of ataIMG which may convert the bis-cysteinyl adduct to yield an epidithiol intermediate. The ataT domain from ataTC then catalyzes the oxidation of the free dithiols, followed by a cyclization step catalyzed by the cytochrome P450 ataF. AtaF probably acts as an epoxidase to promote a dual epoxidation formation at C8 and C9 along with C8' and C9', followed by the spontaneous nucleophilic attack of the amide nitrogens N10 and N10' to yield an intermediate with the pyrrolidine partial structure. The final steps of acetylaranotin biosynthesis involve the acetylation and ring rearrangement of an epitetrathiodiketopiperazine intermediate to produce acetylaranotin. AtaH probably catalyzes the acetylation of epitetrathiodiketopiperazine to produce a diacetate and ataY is responsible for the formation of the dihydrooxepin moiety that converts the diacetate intermediate to acetylaranotin via acetylapoaranotin. Both enzymes could function independently in the absence of the other. The specific function of ataL within the pathway has still to be determined. The acetylaranotin bis-thiomethyltransferase ataS located outside of acetylaranotin gene cluster is the main thiomethyltransferase responsible for converting acetylaranotin and its related intermediates to their methylated forms. The chain is Acetylaranotin biosynthesis cluster protein L from Aspergillus terreus (strain NIH 2624 / FGSC A1156).